Consider the following 325-residue polypeptide: Lipoyl synthase (325 aa).

Residues 1–33 (MATVIDTLKARGSEDRAARHPEKQNRPDTPVLR) are disordered. A compositionally biased stretch (basic and acidic residues) spans 8 to 33 (LKARGSEDRAARHPEKQNRPDTPVLR). 7 residues coordinate [4Fe-4S] cluster: cysteine 64, cysteine 69, cysteine 75, cysteine 90, cysteine 94, cysteine 97, and serine 303. A Radical SAM core domain is found at 76 to 292 (WSQKHATMMI…EAIARAKGFL (217 aa)).

The protein belongs to the radical SAM superfamily. Lipoyl synthase family. [4Fe-4S] cluster serves as cofactor.

Its subcellular location is the cytoplasm. It carries out the reaction [[Fe-S] cluster scaffold protein carrying a second [4Fe-4S](2+) cluster] + N(6)-octanoyl-L-lysyl-[protein] + 2 oxidized [2Fe-2S]-[ferredoxin] + 2 S-adenosyl-L-methionine + 4 H(+) = [[Fe-S] cluster scaffold protein] + N(6)-[(R)-dihydrolipoyl]-L-lysyl-[protein] + 4 Fe(3+) + 2 hydrogen sulfide + 2 5'-deoxyadenosine + 2 L-methionine + 2 reduced [2Fe-2S]-[ferredoxin]. It participates in protein modification; protein lipoylation via endogenous pathway; protein N(6)-(lipoyl)lysine from octanoyl-[acyl-carrier-protein]: step 2/2. Functionally, catalyzes the radical-mediated insertion of two sulfur atoms into the C-6 and C-8 positions of the octanoyl moiety bound to the lipoyl domains of lipoate-dependent enzymes, thereby converting the octanoylated domains into lipoylated derivatives. The protein is Lipoyl synthase of Caulobacter vibrioides (strain ATCC 19089 / CIP 103742 / CB 15) (Caulobacter crescentus).